A 156-amino-acid chain; its full sequence is Ribosomal RNA large subunit methyltransferase H (156 aa).

S-adenosyl-L-methionine is bound by residues leucine 73, glycine 104, and 123–128; that span reads LSRLTL.

This sequence belongs to the RNA methyltransferase RlmH family. Homodimer.

It is found in the cytoplasm. The enzyme catalyses pseudouridine(1915) in 23S rRNA + S-adenosyl-L-methionine = N(3)-methylpseudouridine(1915) in 23S rRNA + S-adenosyl-L-homocysteine + H(+). Its function is as follows. Specifically methylates the pseudouridine at position 1915 (m3Psi1915) in 23S rRNA. The polypeptide is Ribosomal RNA large subunit methyltransferase H (Thiobacillus denitrificans (strain ATCC 25259 / T1)).